The following is a 164-amino-acid chain: UPF0303 protein R02983 (164 aa).

It belongs to the UPF0303 family.

In Rhizobium meliloti (strain 1021) (Ensifer meliloti), this protein is UPF0303 protein R02983.